Here is a 146-residue protein sequence, read N- to C-terminus: NADPH-dependent 7-cyano-7-deazaguanine reductase (146 aa).

The active-site Thioimide intermediate is C48. D55 serves as the catalytic Proton donor. Substrate-binding positions include 70–72 (VES) and 89–90 (HE).

Belongs to the GTP cyclohydrolase I family. QueF type 1 subfamily.

The protein localises to the cytoplasm. The enzyme catalyses 7-aminomethyl-7-carbaguanine + 2 NADP(+) = 7-cyano-7-deazaguanine + 2 NADPH + 3 H(+). It participates in tRNA modification; tRNA-queuosine biosynthesis. Functionally, catalyzes the NADPH-dependent reduction of 7-cyano-7-deazaguanine (preQ0) to 7-aminomethyl-7-deazaguanine (preQ1). The chain is NADPH-dependent 7-cyano-7-deazaguanine reductase from Helicobacter pylori (strain Shi470).